A 305-amino-acid chain; its full sequence is Transmembrane epididymal protein 1A (305 aa).

Residues 4–24 form a helical membrane-spanning segment; it reads FIGHISPGLFLVFYGLYQAVI. The N-linked (GlcNAc...) asparagine glycan is linked to Asn32. A run of 5 helical transmembrane segments spans residues 54 to 74, 124 to 144, 159 to 179, 187 to 207, and 223 to 243; these read IAHAGWLKVVIGSLLIVYEIS, CVLLERGATVLGVYVLLLLLV, SLLILVVFLLMLVLTAELWAP, IETFLILIMGSWLIQAAFILF, and IMFVTTFFCWHVMINALCMLG. The disordered stretch occupies residues 285-305; sequence EQQDKDDQAPLLSKISPCDRA.

This sequence belongs to the TMEM45 family.

It localises to the membrane. This chain is Transmembrane epididymal protein 1A, found in Mus musculus (Mouse).